We begin with the raw amino-acid sequence, 268 residues long: Phosphatidylglycerol--prolipoprotein diacylglyceryl transferase (268 aa).

The next 7 membrane-spanning stretches (helical) occupy residues 23 to 43 (IGLRWYGLMYLLGFVFARWLA), 62 to 82 (LLFNGFMGVFIGGRVGDVFFY), 97 to 117 (VWEGGMSFHGGLIGVIVAMIW), 132 to 152 (FVAPLIPFGLGLGRIGNFINL), 179 to 199 (SQLYEAFLEGLVLFAILNIFI), 206 to 226 (ASVAGLFLIGYGVFRFIVEYV), and 241 to 261 (GQALCLPMIIGGAFIMAWAYS). Arg145 provides a ligand contact to a 1,2-diacyl-sn-glycero-3-phospho-(1'-sn-glycerol).

It belongs to the Lgt family.

It is found in the cell inner membrane. It catalyses the reaction L-cysteinyl-[prolipoprotein] + a 1,2-diacyl-sn-glycero-3-phospho-(1'-sn-glycerol) = an S-1,2-diacyl-sn-glyceryl-L-cysteinyl-[prolipoprotein] + sn-glycerol 1-phosphate + H(+). The protein operates within protein modification; lipoprotein biosynthesis (diacylglyceryl transfer). In terms of biological role, catalyzes the transfer of the diacylglyceryl group from phosphatidylglycerol to the sulfhydryl group of the N-terminal cysteine of a prolipoprotein, the first step in the formation of mature lipoproteins. The protein is Phosphatidylglycerol--prolipoprotein diacylglyceryl transferase of Haemophilus influenzae (strain 86-028NP).